Consider the following 496-residue polypeptide: Catalase isozyme 3 (496 aa).

A disordered region spans residues Met-1–Ala-25. Polar residues predominate over residues Arg-9–Ala-23. Active-site residues include His-67 and Asn-140. Tyr-351 contacts heme. The tract at residues Pro-402 to Glu-422 is disordered.

The protein belongs to the catalase family. As to quaternary structure, homotetramer. Heme serves as cofactor. As to expression, leaf mesophyll cells, pericarp, seedling roots and the coleoptile.

The protein localises to the mitochondrion. It carries out the reaction 2 H2O2 = O2 + 2 H2O. In terms of biological role, occurs in almost all aerobically respiring organisms and serves to protect cells from the toxic effects of hydrogen peroxide. Its levels are highest in the light period and are lowest in the dark period, hence it may be important for scavenging hydrogen peroxide at night, rather than during the day. This Zea mays (Maize) protein is Catalase isozyme 3 (CAT3).